Consider the following 148-residue polypeptide: Large ribosomal subunit protein bL9 (148 aa).

It belongs to the bacterial ribosomal protein bL9 family.

In terms of biological role, binds to the 23S rRNA. This Staphylococcus aureus (strain Newman) protein is Large ribosomal subunit protein bL9.